The chain runs to 175 residues: Crossover junction endodeoxyribonuclease RuvC (175 aa).

Active-site residues include Asp12, Glu72, and Asp144. Positions 12, 72, and 144 each coordinate Mg(2+).

This sequence belongs to the RuvC family. Homodimer which binds Holliday junction (HJ) DNA. The HJ becomes 2-fold symmetrical on binding to RuvC with unstacked arms; it has a different conformation from HJ DNA in complex with RuvA. In the full resolvosome a probable DNA-RuvA(4)-RuvB(12)-RuvC(2) complex forms which resolves the HJ. It depends on Mg(2+) as a cofactor.

Its subcellular location is the cytoplasm. The catalysed reaction is Endonucleolytic cleavage at a junction such as a reciprocal single-stranded crossover between two homologous DNA duplexes (Holliday junction).. Functionally, the RuvA-RuvB-RuvC complex processes Holliday junction (HJ) DNA during genetic recombination and DNA repair. Endonuclease that resolves HJ intermediates. Cleaves cruciform DNA by making single-stranded nicks across the HJ at symmetrical positions within the homologous arms, yielding a 5'-phosphate and a 3'-hydroxyl group; requires a central core of homology in the junction. The consensus cleavage sequence is 5'-(A/T)TT(C/G)-3'. Cleavage occurs on the 3'-side of the TT dinucleotide at the point of strand exchange. HJ branch migration catalyzed by RuvA-RuvB allows RuvC to scan DNA until it finds its consensus sequence, where it cleaves and resolves the cruciform DNA. This Beijerinckia indica subsp. indica (strain ATCC 9039 / DSM 1715 / NCIMB 8712) protein is Crossover junction endodeoxyribonuclease RuvC.